A 387-amino-acid chain; its full sequence is Succinate--CoA ligase [ADP-forming] subunit beta (387 aa).

The ATP-grasp domain occupies 9–236 (KELFAKHNVP…RAATDPLELK (228 aa)). ATP contacts are provided by residues K45, 52-54 (GRG), S94, and E99. Mg(2+)-binding residues include N191 and D205. Substrate contacts are provided by residues N256 and 318-320 (GIT).

This sequence belongs to the succinate/malate CoA ligase beta subunit family. Heterotetramer of two alpha and two beta subunits. Requires Mg(2+) as cofactor.

It carries out the reaction succinate + ATP + CoA = succinyl-CoA + ADP + phosphate. It catalyses the reaction GTP + succinate + CoA = succinyl-CoA + GDP + phosphate. It functions in the pathway carbohydrate metabolism; tricarboxylic acid cycle; succinate from succinyl-CoA (ligase route): step 1/1. Its function is as follows. Succinyl-CoA synthetase functions in the citric acid cycle (TCA), coupling the hydrolysis of succinyl-CoA to the synthesis of either ATP or GTP and thus represents the only step of substrate-level phosphorylation in the TCA. The beta subunit provides nucleotide specificity of the enzyme and binds the substrate succinate, while the binding sites for coenzyme A and phosphate are found in the alpha subunit. The chain is Succinate--CoA ligase [ADP-forming] subunit beta from Mycobacterium bovis (strain ATCC BAA-935 / AF2122/97).